Consider the following 340-residue polypeptide: Deubiquitinase SseL (340 aa).

Residue H223 is part of the active site. C285 functions as the Nucleophile in the catalytic mechanism.

The protein belongs to the peptidase C79 family.

The protein localises to the secreted. The protein resides in the host cytoplasm. Effector proteins function to alter host cell physiology and promote bacterial survival in host tissues. This protease targets the host cell ubiquitin pathway by acting as a deubiquitinase in infected host cells. This chain is Deubiquitinase SseL (sseL), found in Salmonella paratyphi B (strain ATCC BAA-1250 / SPB7).